The primary structure comprises 769 residues: CO(2)-response secreted protease (769 aa).

Residues 1-27 (MKGITFFTPFLSFLYLLCILFMTETEA) form the signal peptide. Residues 35 to 108 (VYIVYMGSAS…VFPDPHFQLH (74 aa)) enclose the Inhibitor I9 domain. A Peptidase S8 domain is found at 112-613 (SWDFLKYQTS…AGELSSTASM (502 aa)). Residues D145 and H210 each act as charge relay system in the active site. Residues 381–465 (ADASEGSARA…SKEAAEIFSY (85 aa)) form the PA domain. The Charge relay system role is filled by S546.

It belongs to the peptidase S8 family. Expressed in roots, guard cells and meristemoid and pavement cells.

It localises to the secreted. Its subcellular location is the cell wall. It catalyses the reaction Release of an N-terminal tripeptide from a polypeptide.. Its function is as follows. Mediates CO(2)-controlled stomatal development by cleaving peptide EPF2 (AC Q8LC53). Not active on peptides EPF1 (AC Q8S8I4) or stomagen (AC Q9SV72). The chain is CO(2)-response secreted protease from Arabidopsis thaliana (Mouse-ear cress).